A 182-amino-acid polypeptide reads, in one-letter code: Small ribosomal subunit protein uS4c (182 aa).

One can recognise an S4 RNA-binding domain in the interval 82–143 (MRLDNILFRL…KQRSKALIQN (62 aa)).

It belongs to the universal ribosomal protein uS4 family. In terms of assembly, part of the 30S ribosomal subunit. Contacts protein S5. The interaction surface between S4 and S5 is involved in control of translational fidelity.

The protein localises to the plastid. It is found in the chloroplast. One of the primary rRNA binding proteins, it binds directly to 16S rRNA where it nucleates assembly of the body of the 30S subunit. In terms of biological role, with S5 and S12 plays an important role in translational accuracy. This is Small ribosomal subunit protein uS4c (rps4) from Isophysis tasmanica.